Consider the following 380-residue polypeptide: Erythronate-4-phosphate dehydrogenase (380 aa).

Substrate-binding residues include Ser-45 and Thr-66. NAD(+) is bound by residues 126–127 (QV), Asp-146, Thr-175, 206–208 (ASR), and Asp-232. Arg-208 is an active-site residue. Residue Glu-237 is part of the active site. His-254 (proton donor) is an active-site residue. Residue Gly-257 participates in NAD(+) binding. Tyr-258 contributes to the substrate binding site.

The protein belongs to the D-isomer specific 2-hydroxyacid dehydrogenase family. PdxB subfamily. In terms of assembly, homodimer.

The protein resides in the cytoplasm. The catalysed reaction is 4-phospho-D-erythronate + NAD(+) = (R)-3-hydroxy-2-oxo-4-phosphooxybutanoate + NADH + H(+). It participates in cofactor biosynthesis; pyridoxine 5'-phosphate biosynthesis; pyridoxine 5'-phosphate from D-erythrose 4-phosphate: step 2/5. Functionally, catalyzes the oxidation of erythronate-4-phosphate to 3-hydroxy-2-oxo-4-phosphonooxybutanoate. The protein is Erythronate-4-phosphate dehydrogenase of Pseudomonas aeruginosa (strain UCBPP-PA14).